The chain runs to 251 residues: Triosephosphate isomerase (251 aa).

9-11 lines the substrate pocket; sequence NWK. The Electrophile role is filled by His-94. Glu-167 serves as the catalytic Proton acceptor. Residues Gly-173, Ser-213, and 234 to 235 each bind substrate; that span reads GG.

Belongs to the triosephosphate isomerase family. In terms of assembly, homodimer.

It localises to the cytoplasm. The enzyme catalyses D-glyceraldehyde 3-phosphate = dihydroxyacetone phosphate. Its pathway is carbohydrate biosynthesis; gluconeogenesis. It participates in carbohydrate degradation; glycolysis; D-glyceraldehyde 3-phosphate from glycerone phosphate: step 1/1. Its function is as follows. Involved in the gluconeogenesis. Catalyzes stereospecifically the conversion of dihydroxyacetone phosphate (DHAP) to D-glyceraldehyde-3-phosphate (G3P). The polypeptide is Triosephosphate isomerase (Finegoldia magna (strain ATCC 29328 / DSM 20472 / WAL 2508) (Peptostreptococcus magnus)).